The chain runs to 139 residues: Aspartate 1-decarboxylase (139 aa).

The Schiff-base intermediate with substrate; via pyruvic acid role is filled by S25. At S25 the chain carries Pyruvic acid (Ser). T57 serves as a coordination point for substrate. Y58 serves as the catalytic Proton donor. 73-75 (GAA) contacts substrate.

The protein belongs to the PanD family. Heterooctamer of four alpha and four beta subunits. Requires pyruvate as cofactor. In terms of processing, is synthesized initially as an inactive proenzyme, which is activated by self-cleavage at a specific serine bond to produce a beta-subunit with a hydroxyl group at its C-terminus and an alpha-subunit with a pyruvoyl group at its N-terminus.

The protein localises to the cytoplasm. It carries out the reaction L-aspartate + H(+) = beta-alanine + CO2. The protein operates within cofactor biosynthesis; (R)-pantothenate biosynthesis; beta-alanine from L-aspartate: step 1/1. Functionally, catalyzes the pyruvoyl-dependent decarboxylation of aspartate to produce beta-alanine. The sequence is that of Aspartate 1-decarboxylase from Mycobacterium bovis (strain BCG / Tokyo 172 / ATCC 35737 / TMC 1019).